We begin with the raw amino-acid sequence, 253 residues long: Shikimate dehydrogenase (NADP(+)) (253 aa).

Shikimate-binding positions include 13-15 and threonine 59; that span reads SIS. Lysine 63 functions as the Proton acceptor in the catalytic mechanism. Residue glutamate 74 participates in NADP(+) binding. Shikimate is bound by residues asparagine 83 and aspartate 94. NADP(+) contacts are provided by residues 115–119, 139–144, and valine 199; these read GAGGA and NRTIER. Residue tyrosine 201 participates in shikimate binding. Residue glycine 221 coordinates NADP(+).

This sequence belongs to the shikimate dehydrogenase family. As to quaternary structure, homodimer.

It catalyses the reaction shikimate + NADP(+) = 3-dehydroshikimate + NADPH + H(+). It participates in metabolic intermediate biosynthesis; chorismate biosynthesis; chorismate from D-erythrose 4-phosphate and phosphoenolpyruvate: step 4/7. Functionally, involved in the biosynthesis of the chorismate, which leads to the biosynthesis of aromatic amino acids. Catalyzes the reversible NADPH linked reduction of 3-dehydroshikimate (DHSA) to yield shikimate (SA). The sequence is that of Shikimate dehydrogenase (NADP(+)) from Thermotoga maritima (strain ATCC 43589 / DSM 3109 / JCM 10099 / NBRC 100826 / MSB8).